We begin with the raw amino-acid sequence, 238 residues long: Histidine/lysine/arginine/ornithine transport system permease protein HisM (238 aa).

Residues 1 to 26 (MIEILHEYWKPLLWTDGYRFTGVAIT) are Periplasmic-facing. The ABC transmembrane type-1 domain occupies 23-221 (VAITLWLLIL…IISYVLISLF (199 aa)). Residues 27–47 (LWLLILSVVIGGVLALFLAIG) traverse the membrane as a helical segment. At 48–58 (RVSSNKYIQFP) the chain is on the cytoplasmic side. The chain crosses the membrane as a helical span at residues 59–79 (IWLFTYIFRGTPLYVQLLVFY). Residues 80–104 (SGMYTLEIVKGTEFLNAFFRSGLNC) lie on the Periplasmic side of the membrane. Residues 105–125 (TVLALTLNTCAYTTEIFAGAI) form a helical membrane-spanning segment. The Cytoplasmic portion of the chain corresponds to 126–157 (RSVPHGEIEAARAYGFSTFKMYRCIILPSALR). Residues 158–178 (IALPAYSNEVILMLHSTALAF) traverse the membrane as a helical segment. Residues 179–199 (TATVPDLLKIARDINAATYQP) are Periplasmic-facing. A helical transmembrane segment spans residues 200–220 (FTAFGIAAVLYLIISYVLISL). Over 221-238 (FRRAEKRWLQHVKPSSTH) the chain is Cytoplasmic.

This sequence belongs to the binding-protein-dependent transport system permease family. HisMQ subfamily. As to quaternary structure, the HisPMQJ complex is composed of two ATP-binding proteins (HisP), two transmembrane proteins (HisM and HisQ) and a solute-binding protein (HisJ). The HisPMQ-ArgT complex is composed of two ATP-binding proteins (HisP), two transmembrane proteins (HisM and HisQ) and a solute-binding protein (ArgT).

The protein localises to the cell inner membrane. Functionally, part of the ABC transporter complex HisPMQJ involved in histidine transport. Is also part of the ABC transporter complex HisPMQ-ArgT involved in lysine/arginine/ornithine transport. Probably responsible for the translocation of the substrate across the membrane. The polypeptide is Histidine/lysine/arginine/ornithine transport system permease protein HisM (hisM) (Escherichia coli O157:H7).